The following is a 481-amino-acid chain: Zinc metalloproteinase/disintegrin (481 aa).

The N-terminal stretch at 1–20 (MIQVLLVTICLAVFPYQGSS) is a signal peptide. A propeptide spanning residues 21 to 190 (IILESGNVDD…KASQLYLTPE (170 aa)) is cleaved from the precursor. The region spanning 197–392 (RHIELAIVVD…KKPQCILNAP (196 aa)) is the Peptidase M12B domain. Ca(2+)-binding residues include Glu-200 and Asp-284. 3 disulfide bridges follow: Cys-308–Cys-387, Cys-349–Cys-371, and Cys-351–Cys-354. Residue His-333 participates in Zn(2+) binding. The active site involves Glu-334. Residues His-337 and His-343 each coordinate Zn(2+). Residues Cys-387 and Asn-390 each coordinate Ca(2+). Positions 393–410 (LRTDTVSTPISGNEFLEA) are excised as a propeptide. The 82-residue stretch at 400–481 (TPISGNEFLE…ADCPRNGLYG (82 aa)) folds into the Disintegrin domain. 6 disulfide bridges follow: Cys-414–Cys-429, Cys-416–Cys-424, Cys-423–Cys-446, Cys-437–Cys-443, Cys-442–Cys-467, and Cys-455–Cys-474. The Cell attachment site motif lies at 459-461 (RGD).

Belongs to the venom metalloproteinase (M12B) family. P-II subfamily. P-IIa sub-subfamily. In terms of assembly, monomer. It depends on Zn(2+) as a cofactor. In terms of tissue distribution, expressed by the venom gland.

The protein localises to the secreted. In terms of biological role, impairs hemostasis in the envenomed animal. Inhibits platelet aggregation induced by ADP and collagen. Acts by inhibiting fibrinogen interaction with platelet receptors GPIIb/GPIIIa (ITGA2B/ITGB3). Has antitumor-growth activity. The polypeptide is Zinc metalloproteinase/disintegrin (Protobothrops jerdonii (Jerdon's pitviper)).